The following is an 81-amino-acid chain: Large ribosomal subunit protein bL31 (81 aa).

It belongs to the bacterial ribosomal protein bL31 family. Type A subfamily. As to quaternary structure, part of the 50S ribosomal subunit.

Its function is as follows. Binds the 23S rRNA. This Fusobacterium nucleatum subsp. nucleatum (strain ATCC 25586 / DSM 15643 / BCRC 10681 / CIP 101130 / JCM 8532 / KCTC 2640 / LMG 13131 / VPI 4355) protein is Large ribosomal subunit protein bL31 (rpmE).